Reading from the N-terminus, the 441-residue chain is MGSRHQVVQQQNRGDVVPGAIKQKSMAVEKKNRRALGDIGNVVTVRGVEGKALPQVSRPITRGFCAQLIANAEAAAAENNKNSLAVNAKGADGALPIKRAVARVPVQKKTVKSKPQEIIEISPDTEKKKAPVLEKEITGEKSLKKKAPTLTSTLTARSKAASVVRTKPKEQIVDIDAADVNNDLAVVEYVEDMYKFYKSAENDSRPHDYMDSQPEINEKMRAILIDWLVQVHYKFELSPETLYLTINIVDRYLASKTTSRRELQLLGMSSMLIASKYEEIWAPEVNDLVCISDGSYSNEQVLRMEKKILGALEWYLTVPTPYVFLVRFIKASLPDSDVEKNMVYFLAELGMMNYATIIMYCPSMIAAAAVYAARCTLNKMPIWNETLRMHTGFSEVQLMDCAKLLIDFHGGSTDQKLQGIYRKYSRLEKGAVALLPQPLLA.

Belongs to the cyclin family. Cyclin AB subfamily. As to quaternary structure, interacts with the CDC2 and CDK2 protein kinases to form a serine/threonine kinase holoenzyme complex. The cyclin subunit imparts substrate specificity to the complex.

Essential for the control of the cell cycle at the G2/M (mitosis) transition. G2/M cyclins accumulate steadily during G2 and are abruptly destroyed at mitosis. The chain is G2/mitotic-specific cyclin-2 from Antirrhinum majus (Garden snapdragon).